A 391-amino-acid polypeptide reads, in one-letter code: S-adenosylmethionine synthase (391 aa).

The disordered stretch occupies residues 1–20; it reads MPRSDYLFTSESVSEGHPDK. Residue His-17 coordinates ATP. Mg(2+) is bound at residue Asp-19. Glu-45 serves as a coordination point for K(+). L-methionine is bound by residues Glu-58 and Gln-102. Positions 102 to 112 are flexible loop; it reads QSADIAQGVDA. ATP is bound by residues 169-171, 235-236, Asp-244, 250-251, Ala-267, and Lys-271; these read DAK, KF, and RK. L-methionine is bound at residue Asp-244. Lys-275 lines the L-methionine pocket.

This sequence belongs to the AdoMet synthase family. In terms of assembly, homotetramer; dimer of dimers. Mg(2+) is required as a cofactor. Requires K(+) as cofactor.

The protein localises to the cytoplasm. It catalyses the reaction L-methionine + ATP + H2O = S-adenosyl-L-methionine + phosphate + diphosphate. It functions in the pathway amino-acid biosynthesis; S-adenosyl-L-methionine biosynthesis; S-adenosyl-L-methionine from L-methionine: step 1/1. Functionally, catalyzes the formation of S-adenosylmethionine (AdoMet) from methionine and ATP. The overall synthetic reaction is composed of two sequential steps, AdoMet formation and the subsequent tripolyphosphate hydrolysis which occurs prior to release of AdoMet from the enzyme. The chain is S-adenosylmethionine synthase from Methylorubrum extorquens (strain CM4 / NCIMB 13688) (Methylobacterium extorquens).